The sequence spans 185 residues: Ribosome-recycling factor (185 aa).

It belongs to the RRF family.

It is found in the cytoplasm. Responsible for the release of ribosomes from messenger RNA at the termination of protein biosynthesis. May increase the efficiency of translation by recycling ribosomes from one round of translation to another. This is Ribosome-recycling factor from Corynebacterium glutamicum (strain ATCC 13032 / DSM 20300 / JCM 1318 / BCRC 11384 / CCUG 27702 / LMG 3730 / NBRC 12168 / NCIMB 10025 / NRRL B-2784 / 534).